Consider the following 397-residue polypeptide: Enoyl-[acyl-carrier-protein] reductase [NADH] (397 aa).

Residues 48 to 53, 74 to 75, 111 to 112, and 139 to 140 each bind NAD(+); these read GASTGY, FE, DA, and VA. Tyrosine 225 contacts substrate. The Proton donor role is filled by tyrosine 235. Residues lysine 244 and 273 to 275 each bind NAD(+); that span reads VVT.

The protein belongs to the TER reductase family. In terms of assembly, monomer.

The enzyme catalyses a 2,3-saturated acyl-[ACP] + NAD(+) = a (2E)-enoyl-[ACP] + NADH + H(+). The protein operates within lipid metabolism; fatty acid biosynthesis. Its function is as follows. Involved in the final reduction of the elongation cycle of fatty acid synthesis (FAS II). Catalyzes the reduction of a carbon-carbon double bond in an enoyl moiety that is covalently linked to an acyl carrier protein (ACP). This chain is Enoyl-[acyl-carrier-protein] reductase [NADH], found in Burkholderia pseudomallei (strain K96243).